The following is a 568-amino-acid chain: Sulfite reductase [NADPH] hemoprotein beta-component (568 aa).

Residues cysteine 425, cysteine 431, cysteine 470, and cysteine 474 each contribute to the [4Fe-4S] cluster site. Cysteine 474 is a binding site for siroheme.

This sequence belongs to the nitrite and sulfite reductase 4Fe-4S domain family. Alpha(8)-beta(8). The alpha component is a flavoprotein, the beta component is a hemoprotein. Requires siroheme as cofactor. [4Fe-4S] cluster is required as a cofactor.

The enzyme catalyses hydrogen sulfide + 3 NADP(+) + 3 H2O = sulfite + 3 NADPH + 4 H(+). The protein operates within sulfur metabolism; hydrogen sulfide biosynthesis; hydrogen sulfide from sulfite (NADPH route): step 1/1. Its function is as follows. Component of the sulfite reductase complex that catalyzes the 6-electron reduction of sulfite to sulfide. This is one of several activities required for the biosynthesis of L-cysteine from sulfate. The polypeptide is Sulfite reductase [NADPH] hemoprotein beta-component (Xanthomonas campestris pv. campestris (strain ATCC 33913 / DSM 3586 / NCPPB 528 / LMG 568 / P 25)).